A 456-amino-acid chain; its full sequence is Exodeoxyribonuclease 7 large subunit (456 aa).

It belongs to the XseA family. As to quaternary structure, heterooligomer composed of large and small subunits.

It localises to the cytoplasm. It catalyses the reaction Exonucleolytic cleavage in either 5'- to 3'- or 3'- to 5'-direction to yield nucleoside 5'-phosphates.. In terms of biological role, bidirectionally degrades single-stranded DNA into large acid-insoluble oligonucleotides, which are then degraded further into small acid-soluble oligonucleotides. The polypeptide is Exodeoxyribonuclease 7 large subunit (Erwinia tasmaniensis (strain DSM 17950 / CFBP 7177 / CIP 109463 / NCPPB 4357 / Et1/99)).